Here is a 301-residue protein sequence, read N- to C-terminus: MARTPQSTPLLISLSVLALLQTSYAGGIAIYWGQNGNEGTLTQTCNTGKYSYVNIAFLNKFGNGQTPEINLAGHCNPASNGCTSVSTGIRNCQNRGIKVMLSIGGGAGSYSLSSSNDAQNVANYLWNNFLGGQSSSRPLGDAVLDGIDFDIELGSTLHWDDLARALSRIEFQQERGRKVYLTAAPQCPFPDKVPGTALNTGLFDYVWVQFYNNPPCQYSSGNTNNLLNSWNRWTSSINSTGSFMGLPASSAAAGRGFIPANVLTSQILPVIKRSPKYGGVMLWSKYYDDQSGYSSSIKSSV.

The N-terminal stretch at 1 to 25 (MARTPQSTPLLISLSVLALLQTSYA) is a signal peptide. Positions 26-301 (GGIAIYWGQN…GYSSSIKSSV (276 aa)) constitute a GH18 domain. Disulfide bonds link cysteine 45–cysteine 92 and cysteine 75–cysteine 82. Catalysis depends on glutamate 152, which acts as the Proton donor. A disulfide bridge links cysteine 187 with cysteine 216.

Belongs to the glycosyl hydrolase 18 family. Chitinase class II subfamily.

The catalysed reaction is Random endo-hydrolysis of N-acetyl-beta-D-glucosaminide (1-&gt;4)-beta-linkages in chitin and chitodextrins.. Its function is as follows. Defense against chitin containing fungal pathogens. The protein is Acidic endochitinase (CHIT3) of Vitis vinifera (Grape).